Consider the following 197-residue polypeptide: ATP-dependent Clp protease proteolytic subunit (197 aa).

Serine 100 acts as the Nucleophile in catalysis. Histidine 125 is an active-site residue.

This sequence belongs to the peptidase S14 family. In terms of assembly, component of the chloroplastic Clp protease core complex.

Its subcellular location is the plastid. The protein localises to the chloroplast stroma. It catalyses the reaction Hydrolysis of proteins to small peptides in the presence of ATP and magnesium. alpha-casein is the usual test substrate. In the absence of ATP, only oligopeptides shorter than five residues are hydrolyzed (such as succinyl-Leu-Tyr-|-NHMec, and Leu-Tyr-Leu-|-Tyr-Trp, in which cleavage of the -Tyr-|-Leu- and -Tyr-|-Trp bonds also occurs).. In terms of biological role, cleaves peptides in various proteins in a process that requires ATP hydrolysis. Has a chymotrypsin-like activity. Plays a major role in the degradation of misfolded proteins. The polypeptide is ATP-dependent Clp protease proteolytic subunit (Angiopteris evecta (Mule's foot fern)).